The chain runs to 85 residues: Alpha-toxin Ac2 (85 aa).

The N-terminal stretch at 1–19 (MNYLVMISLALLFMTGVES) is a signal peptide. An LCN-type CS-alpha/beta domain is found at 21-83 (KDGYIVDDRN…VRTKGPGRCK (63 aa)). Cystine bridges form between cysteine 31–cysteine 82, cysteine 35–cysteine 55, cysteine 41–cysteine 65, and cysteine 45–cysteine 67. Lysine 83 bears the Lysine amide mark.

The protein belongs to the long (4 C-C) scorpion toxin superfamily. Sodium channel inhibitor family. Alpha subfamily. As to expression, expressed by the venom gland.

The protein resides in the secreted. In terms of biological role, alpha toxins bind voltage-independently at site-3 of sodium channels (Nav) and inhibit the inactivation of the activated channels, thereby blocking neuronal transmission. The chain is Alpha-toxin Ac2 from Androctonus crassicauda (Arabian fat-tailed scorpion).